The following is a 258-amino-acid chain: UPF0246 protein Bpro_3713 (258 aa).

Belongs to the UPF0246 family.

The chain is UPF0246 protein Bpro_3713 from Polaromonas sp. (strain JS666 / ATCC BAA-500).